Consider the following 729-residue polypeptide: Fatty acid oxidation complex subunit alpha (729 aa).

Positions 1–189 are enoyl-CoA hydratase/isomerase; sequence MLYKGDTLYL…KIGLVDGVVA (189 aa). A substrate-binding site is contributed by Asp296. A 3-hydroxyacyl-CoA dehydrogenase region spans residues 311 to 729; the sequence is ETPKHAAVLG…ARPVGALKTA (419 aa). NAD(+) contacts are provided by residues Met324, Asp343, 400–402, Lys407, and Ser429; that span reads VVE. The For 3-hydroxyacyl-CoA dehydrogenase activity role is filled by His450. Asn453 provides a ligand contact to NAD(+). Residues Asn500 and Tyr660 each contribute to the substrate site.

This sequence in the N-terminal section; belongs to the enoyl-CoA hydratase/isomerase family. It in the C-terminal section; belongs to the 3-hydroxyacyl-CoA dehydrogenase family. As to quaternary structure, heterotetramer of two alpha chains (FadB) and two beta chains (FadA).

It carries out the reaction a (3S)-3-hydroxyacyl-CoA + NAD(+) = a 3-oxoacyl-CoA + NADH + H(+). The enzyme catalyses a (3S)-3-hydroxyacyl-CoA = a (2E)-enoyl-CoA + H2O. The catalysed reaction is a 4-saturated-(3S)-3-hydroxyacyl-CoA = a (3E)-enoyl-CoA + H2O. It catalyses the reaction (3S)-3-hydroxybutanoyl-CoA = (3R)-3-hydroxybutanoyl-CoA. It carries out the reaction a (3Z)-enoyl-CoA = a 4-saturated (2E)-enoyl-CoA. The enzyme catalyses a (3E)-enoyl-CoA = a 4-saturated (2E)-enoyl-CoA. The protein operates within lipid metabolism; fatty acid beta-oxidation. In terms of biological role, involved in the aerobic and anaerobic degradation of long-chain fatty acids via beta-oxidation cycle. Catalyzes the formation of 3-oxoacyl-CoA from enoyl-CoA via L-3-hydroxyacyl-CoA. It can also use D-3-hydroxyacyl-CoA and cis-3-enoyl-CoA as substrate. This chain is Fatty acid oxidation complex subunit alpha, found in Klebsiella pneumoniae subsp. pneumoniae (strain ATCC 700721 / MGH 78578).